A 399-amino-acid chain; its full sequence is MAKEKYERTKPHVNIGTIGHVDHGKTTLTAAISKVLHEEFPDVNPEYDFNQIDSAPEEAARGITINIAHIEYQTEKRHYAHVDCPGHADFVKNMITGAAQMDGAILVVAATDGPMAQTREHVLLARQVGVPKILVALNKCDMVDDEELIELVEEEVRDLLDENGFDRDCPVIHTSAYGALHDDAPDHEKWVQSVKDLMDAVDDYIPTPVHDLDKPFLMPIEDVFTISGRGTVVTGRVERGQLAVNTPVEIVGIRPTQQTTVTSIETFHKTMDACEAGDNTGLLLRGLGRDDVERGQVVAKPGSVTPHTKFEGEVYVLTKDEGGRHSPFFSNYRPQFYFRTTDVTGVIELPEGVEMVQPGDHATFTVELIQPIAMEEGLTFAVREGGHTVGSGRVTKILA.

Residues 10 to 209 enclose the tr-type G domain; sequence KPHVNIGTIG…AVDDYIPTPV (200 aa). The G1 stretch occupies residues 19 to 26; it reads GHVDHGKT. 19–26 is a binding site for GTP; it reads GHVDHGKT. Residue Thr-26 participates in Mg(2+) binding. Residues 62-66 are G2; it reads GITIN. The segment at 83 to 86 is G3; sequence DCPG. Residues 83 to 87 and 138 to 141 each bind GTP; these read DCPGH and NKCD. The G4 stretch occupies residues 138 to 141; the sequence is NKCD. The segment at 175 to 177 is G5; the sequence is SAY.

Belongs to the TRAFAC class translation factor GTPase superfamily. Classic translation factor GTPase family. EF-Tu/EF-1A subfamily. Monomer.

Its subcellular location is the cytoplasm. The catalysed reaction is GTP + H2O = GDP + phosphate + H(+). In terms of biological role, GTP hydrolase that promotes the GTP-dependent binding of aminoacyl-tRNA to the A-site of ribosomes during protein biosynthesis. The protein is Elongation factor Tu of Bifidobacterium longum (strain DJO10A).